A 151-amino-acid chain; its full sequence is S-ribosylhomocysteine lyase (151 aa).

3 residues coordinate Fe cation: His54, His58, and Cys121.

This sequence belongs to the LuxS family. In terms of assembly, homodimer. Requires Fe cation as cofactor.

The enzyme catalyses S-(5-deoxy-D-ribos-5-yl)-L-homocysteine = (S)-4,5-dihydroxypentane-2,3-dione + L-homocysteine. Involved in the synthesis of autoinducer 2 (AI-2) which is secreted by bacteria and is used to communicate both the cell density and the metabolic potential of the environment. The regulation of gene expression in response to changes in cell density is called quorum sensing. Catalyzes the transformation of S-ribosylhomocysteine (RHC) to homocysteine (HC) and 4,5-dihydroxy-2,3-pentadione (DPD). This is S-ribosylhomocysteine lyase from Clostridium botulinum (strain Alaska E43 / Type E3).